A 469-amino-acid chain; its full sequence is Minor capsid protein L2 (469 aa).

Residues 1–13 carry the Nuclear localization signal motif; it reads MRHKRSTKRVKRA. The cysteines at positions 22 and 28 are disulfide-linked. The Nuclear localization signal signature appears at 450–458; it reads LLKRRRKRI.

It belongs to the papillomaviridae L2 protein family. As to quaternary structure, interacts with major capsid protein L1. Interacts with E2; this interaction inhibits E2 transcriptional activity but not the DNA replication function E2. Interacts with host GADD45GIP1. Interacts with host HSPA8; this interaction is required for L2 nuclear translocation. Interacts with host importins KPNB2 and KPNB3. Forms a complex with importin alpha2-beta1 heterodimers via interaction with the importin alpha2 adapter. Interacts with host DYNLT1; this interaction is essential for virus intracellular transport during entry. Interacts (via C-terminus) with host retromer subunits VPS35 and VPS29. Post-translationally, highly phosphorylated.

Its subcellular location is the virion. It is found in the host nucleus. The protein resides in the host early endosome. It localises to the host Golgi apparatus. Minor protein of the capsid that localizes along the inner surface of the virion, within the central cavities beneath the L1 pentamers. Plays a role in capsid stabilization through interaction with the major capsid protein L1. Once the virion enters the host cell, L2 escorts the genomic DNA into the nucleus by promoting escape from the endosomal compartments and traffic through the host Golgi network. Mechanistically, the C-terminus of L2 possesses a cell-penetrating peptide that protudes from the host endosome, interacts with host cytoplasmic retromer cargo and thereby mediates the capsid delivery to the host trans-Golgi network. Plays a role through its interaction with host dynein in the intracellular microtubule-dependent transport of viral capsid toward the nucleus. Mediates the viral genome import into the nucleus through binding to host importins. Once within the nucleus, L2 localizes viral genomes to host PML bodies in order to activate early gene expression for establishment of infection. Later on, promotes late gene expression by interacting with the viral E2 protein and by inhibiting its transcriptional activation functions. During virion assembly, encapsidates the genome by direct interaction with the viral DNA. The protein is Minor capsid protein L2 of Human papillomavirus 35.